Consider the following 89-residue polypeptide: Cell division topological specificity factor (89 aa).

This sequence belongs to the MinE family.

Functionally, prevents the cell division inhibition by proteins MinC and MinD at internal division sites while permitting inhibition at polar sites. This ensures cell division at the proper site by restricting the formation of a division septum at the midpoint of the long axis of the cell. This Photorhabdus laumondii subsp. laumondii (strain DSM 15139 / CIP 105565 / TT01) (Photorhabdus luminescens subsp. laumondii) protein is Cell division topological specificity factor.